Consider the following 325-residue polypeptide: Phospholipid phosphatase-related protein type 1 (325 aa).

Asn-5 carries N-linked (GlcNAc...) asparagine glycosylation. Helical transmembrane passes span Ile-13–Tyr-33, Phe-67–Ile-87, and Phe-127–Val-147. The N-linked (GlcNAc...) asparagine glycan is linked to Asn-163. The next 3 helical transmembrane spans lie at Ala-201–Thr-218, Val-230–Val-247, and Val-257–His-277. The residue at position 307 (Ser-307) is a Phosphoserine. A glycan (N-linked (GlcNAc...) asparagine) is linked at Asn-316.

It belongs to the PA-phosphatase related phosphoesterase family.

The protein localises to the cell membrane. It is found in the cell projection. Its subcellular location is the neuron projection. Functionally, may play a role in neurite outgrowth and neurogenesis. This chain is Phospholipid phosphatase-related protein type 1, found in Homo sapiens (Human).